The primary structure comprises 358 residues: Trace amine-associated receptor 7b (358 aa).

Topologically, residues 1-47 are extracellular; sequence MATDNDSFPWDQDSILSSDMFSATSTELCYENLNRSCVRSPYSPGPR. 2 N-linked (GlcNAc...) asparagine glycosylation sites follow: asparagine 5 and asparagine 34. Cystine bridges form between cysteine 37–cysteine 201 and cysteine 120–cysteine 205. The chain crosses the membrane as a helical span at residues 48–68; that stretch reads LILYAVFGFGAALAVCGNLLV. Residues 69–83 lie on the Cytoplasmic side of the membrane; the sequence is MTSILHFRQLHSPAN. Residues 84–104 form a helical membrane-spanning segment; sequence FLVVSLACADFLVGLTVMPFS. The Extracellular portion of the chain corresponds to 105-121; the sequence is TVRSVEGCWYFGESYCK. Residues 122–143 form a helical membrane-spanning segment; the sequence is LHTCFDVSFCYCSIFHLCFISV. Residues 144–166 are Cytoplasmic-facing; the sequence is DRYIAVSDPLTYPTRFTAFVSGK. Residues 167–187 traverse the membrane as a helical segment; sequence CITFSWLLSTIYGFSLLYTGA. Over 188 to 212 the chain is Extracellular; sequence NEAGLEDLVSALTCVGGCQLAVNQS. An N-linked (GlcNAc...) asparagine glycan is attached at asparagine 210. Residues 213–233 form a helical membrane-spanning segment; sequence WVFINFLLFLIPTLVMITVYS. At 234–274 the chain is on the cytoplasmic side; it reads KIFLIAKQQAQNIEKMSKQTARASDSYKDRVAKRERKAAKT. The helical transmembrane segment at 275–295 threads the bilayer; it reads LGIAVAAFLLSWLPYFIDSII. Over 296–309 the chain is Extracellular; that stretch reads DAFLGFITPTYVYE. A helical membrane pass occupies residues 310 to 333; sequence ILVWIAYYNSAMNPLIYAFFYPWF. At 334-358 the chain is on the cytoplasmic side; that stretch reads RKAIKLIVSGKVLRENSSTTNLFPE.

This sequence belongs to the G-protein coupled receptor 1 family. In terms of tissue distribution, specifically expressed in neurons of the olfactory epithelium.

The protein resides in the cell membrane. Its function is as follows. Olfactory receptor specific for N,N-dimethylalkylamines trace amines, such as N,N-dimethylcyclohexylamine. Trace amine compounds are enriched in animal body fluids and act on trace amine-associated receptors (TAARs) to elicit both intraspecific and interspecific innate behaviors. Ligand-binding causes a conformation change that triggers signaling via G(s)-class of G alpha proteins (GNAL or GNAS). This is Trace amine-associated receptor 7b from Mus musculus (Mouse).